A 248-amino-acid chain; its full sequence is Tetraspanin-18 (248 aa).

The Cytoplasmic portion of the chain corresponds to 1 to 13; that stretch reads MEGDCLSCMKYLM. A helical transmembrane segment spans residues 14–34; the sequence is FVFNFFIFLGGACLLAIGIWV. The Extracellular segment spans residues 35-49; it reads MVDPTGFREIVAANP. A helical membrane pass occupies residues 50-70; sequence LLLTGAYILLAMGGLLFLLGF. At 71 to 83 the chain is on the cytoplasmic side; that stretch reads LGCCGAVRENKCL. The chain crosses the membrane as a helical span at residues 84–104; the sequence is LLFFFLFILIIFLAELSAAIL. Residues 105–223 are Extracellular-facing; it reads AFIFRENLTR…TFETYVYLAG (119 aa). 2 N-linked (GlcNAc...) asparagine glycosylation sites follow: N111 and N129. A helical transmembrane segment spans residues 224–244; sequence ALAIGVLAIELFAMIFAMCLF. The Cytoplasmic segment spans residues 245–248; that stretch reads RGIQ.

Belongs to the tetraspanin (TM4SF) family. In terms of assembly, interacts with ORAI1; this interaction regulates ORAI1 exit from the endoplasmic (ER), and/or Golgi, and trafficking to the cell surface. As to expression, highly expressed in primary endothelial cells. Expressed in the embryo heart. Weakly expressed the embryo skeletal muscle.

The protein resides in the membrane. Plays a role in the cell surface localization of ORAI1 and may participate in the regulation of Ca(2+) signaling and the VWF release in response to inflammatory stimuli. The sequence is that of Tetraspanin-18 from Homo sapiens (Human).